The sequence spans 314 residues: 2,3-dihydroxyphenylpropionate/2,3-dihydroxicinnamic acid 1,2-dioxygenase (314 aa).

Catalysis depends on His-115, which acts as the Proton donor. His-179 serves as the catalytic Proton acceptor.

This sequence belongs to the LigB/MhpB extradiol dioxygenase family. In terms of assembly, homotetramer. The cofactor is Fe(2+).

The catalysed reaction is 3-(2,3-dihydroxyphenyl)propanoate + O2 = (2Z,4E)-2-hydroxy-6-oxonona-2,4-dienedioate + H(+). The enzyme catalyses (2E)-3-(2,3-dihydroxyphenyl)prop-2-enoate + O2 = (2Z,4E,7E)-2-hydroxy-6-oxonona-2,4,7-trienedioate + H(+). It functions in the pathway aromatic compound metabolism; 3-phenylpropanoate degradation. In terms of biological role, catalyzes the non-heme iron(II)-dependent oxidative cleavage of 2,3-dihydroxyphenylpropionic acid and 2,3-dihydroxicinnamic acid into 2-hydroxy-6-ketononadienedioate and 2-hydroxy-6-ketononatrienedioate, respectively. The sequence is that of 2,3-dihydroxyphenylpropionate/2,3-dihydroxicinnamic acid 1,2-dioxygenase from Escherichia coli O139:H28 (strain E24377A / ETEC).